Here is a 58-residue protein sequence, read N- to C-terminus: Large ribosomal subunit protein eL20 (58 aa).

Positions 37–58 (TTVGSQHNRKRPQIEIKEVSAA) are disordered. Residues 48 to 58 (PQIEIKEVSAA) are compositionally biased toward basic and acidic residues.

The protein belongs to the eukaryotic ribosomal protein eL20 family. Part of the 50S ribosomal subunit. Binds 23S rRNA.

This Halorubrum lacusprofundi (strain ATCC 49239 / DSM 5036 / JCM 8891 / ACAM 34) protein is Large ribosomal subunit protein eL20.